A 302-amino-acid chain; its full sequence is Sulfate adenylyltransferase subunit 2 (302 aa).

The protein belongs to the PAPS reductase family. CysD subfamily. Heterodimer composed of CysD, the smaller subunit, and CysN.

It catalyses the reaction sulfate + ATP + H(+) = adenosine 5'-phosphosulfate + diphosphate. Its pathway is sulfur metabolism; hydrogen sulfide biosynthesis; sulfite from sulfate: step 1/3. With CysN forms the ATP sulfurylase (ATPS) that catalyzes the adenylation of sulfate producing adenosine 5'-phosphosulfate (APS) and diphosphate, the first enzymatic step in sulfur assimilation pathway. APS synthesis involves the formation of a high-energy phosphoric-sulfuric acid anhydride bond driven by GTP hydrolysis by CysN coupled to ATP hydrolysis by CysD. In Shigella boydii serotype 4 (strain Sb227), this protein is Sulfate adenylyltransferase subunit 2.